Here is a 141-residue protein sequence, read N- to C-terminus: Hemoglobin subunit alpha-A (141 aa).

In terms of domain architecture, Globin spans 1–141 (VLSAADKNNV…VGTVLTAKYR (141 aa)). An O2-binding site is contributed by histidine 58. Histidine 87 provides a ligand contact to heme b.

It belongs to the globin family. Heterotetramer of two alpha chains and two beta chains. In terms of tissue distribution, red blood cells.

In terms of biological role, involved in oxygen transport from the lung to the various peripheral tissues. In Phasianus colchicus colchicus (Black-necked pheasant), this protein is Hemoglobin subunit alpha-A (HBAA).